A 408-amino-acid polypeptide reads, in one-letter code: Elongation factor Tu (408 aa).

The tr-type G domain maps to 10 to 219 (KTHVNVGTIG…ALDTYIPDPV (210 aa)). Residues 19 to 26 (GHVDHGKT), 88 to 92 (DCPGH), and 143 to 146 (NKCD) contribute to the GTP site. Mg(2+) is bound at residue Thr26.

Belongs to the TRAFAC class translation factor GTPase superfamily. Classic translation factor GTPase family. EF-Tu/EF-1A subfamily. As to quaternary structure, monomer.

The protein localises to the cytoplasm. The catalysed reaction is GTP + H2O = GDP + phosphate + H(+). GTP hydrolase that promotes the GTP-dependent binding of aminoacyl-tRNA to the A-site of ribosomes during protein biosynthesis. The chain is Elongation factor Tu from Brachyspira hyodysenteriae (strain ATCC 49526 / WA1).